The sequence spans 331 residues: Probable allantoicase (331 aa).

It belongs to the allantoicase family.

It catalyses the reaction allantoate + H2O = (S)-ureidoglycolate + urea. Its pathway is nitrogen metabolism; (S)-allantoin degradation; (S)-ureidoglycolate from allantoate (aminidohydrolase route): step 1/1. In Pseudomonas syringae pv. tomato (strain ATCC BAA-871 / DC3000), this protein is Probable allantoicase.